The primary structure comprises 358 residues: Ribosomal RNA large subunit methyltransferase M (358 aa).

S-adenosyl-L-methionine contacts are provided by residues Ser-187, 220–223, Asp-239, Asp-259, and Asp-276; that span reads CPGG. Lys-305 (proton acceptor) is an active-site residue.

It belongs to the class I-like SAM-binding methyltransferase superfamily. RNA methyltransferase RlmE family. RlmM subfamily. Monomer.

It is found in the cytoplasm. The catalysed reaction is cytidine(2498) in 23S rRNA + S-adenosyl-L-methionine = 2'-O-methylcytidine(2498) in 23S rRNA + S-adenosyl-L-homocysteine + H(+). Its function is as follows. Catalyzes the 2'-O-methylation at nucleotide C2498 in 23S rRNA. This Shewanella woodyi (strain ATCC 51908 / MS32) protein is Ribosomal RNA large subunit methyltransferase M.